Consider the following 904-residue polypeptide: Translation initiation factor IF-2 (904 aa).

Residues 239 to 316 form a disordered region; it reads QAATQAKTSE…DDGQGSFQAP (78 aa). Over residues 248 to 278 the composition is skewed to basic and acidic residues; it reads EGAEKGTLHKKPETPGKKGDKGGRAADDGKK. One can recognise a tr-type G domain in the interval 404-571; it reads HRAPVVTVMG…QVLLQAEILE (168 aa). The tract at residues 413 to 420 is G1; sequence GHVDHGKT. 413–420 lines the GTP pocket; it reads GHVDHGKT. The interval 438 to 442 is G2; sequence GITQH. The G3 stretch occupies residues 459-462; sequence DTPG. Residues 459–463 and 513–516 each bind GTP; these read DTPGH and NKID. The tract at residues 513–516 is G4; it reads NKID. Positions 549–551 are G5; the sequence is SAK.

Belongs to the TRAFAC class translation factor GTPase superfamily. Classic translation factor GTPase family. IF-2 subfamily.

It is found in the cytoplasm. Its function is as follows. One of the essential components for the initiation of protein synthesis. Protects formylmethionyl-tRNA from spontaneous hydrolysis and promotes its binding to the 30S ribosomal subunits. Also involved in the hydrolysis of GTP during the formation of the 70S ribosomal complex. In Dechloromonas aromatica (strain RCB), this protein is Translation initiation factor IF-2.